The following is an 84-amino-acid chain: Large ribosomal subunit protein bL27 (84 aa).

Residues 1–27 (MAHKKGQGASRNGRDSKSKRLGVKVGA) are disordered.

This sequence belongs to the bacterial ribosomal protein bL27 family.

This is Large ribosomal subunit protein bL27 from Chlamydia pneumoniae (Chlamydophila pneumoniae).